A 456-amino-acid polypeptide reads, in one-letter code: Ribonuclease inhibitor (456 aa).

Position 1 is an N-acetylmethionine (M1). LRR repeat units follow at residues 15–43, 44–71, 72–100, 101–128, 129–157, 158–185, 186–214, 215–242, 243–271, 272–299, 300–328, 329–356, 357–385, 386–413, and 414–442; these read WTELLPLLQQYEVVRLDDCGLTEEHCKDI, GSALRANPSLTELCLRTNELGDAGVHLV, LQGLQSPTCKIQKLSLQNCSLTEAGCGVL, PSTLRSLPTLRELHLSDNPLGDAGLRLL, CEGLLDPQCHLEKLQLEYCRLTAASCEPL, ASVLRATRALKELTVSNNDIGEAGARVL, GQGLADSACQLETLRLENCGLTPANCKDL, CGIVASQASLRELDLGSNGLGDAGIAEL, CPGLLSPASRLKTLWLWECDITASGCRDL, CRVLQAKETLKELSLAGNKLGDEGARLL, CESLLQPGCQLESLWVKSCSLTAACCQHV, SLMLTQNKHLLELQLSSNKLGDSGIQEL, CQALSQPGTTLRVLCLGDCEVTNSGCSSL, ASLLLANRSLRELDLSNNCVGDPGVLQL, and LGSLEQPGCALEQLVLYDTYWTEEVEDRL. S86 bears the Phosphoserine mark.

Forms high-affinity heterodimers with RNASE1, ANG and RNASE2.

It is found in the cytoplasm. The protein resides in the nucleus. Ribonuclease inhibitor which inhibits RNASE1, RNASE2 and angiogenin (ANG). May play a role in redox homeostasis. Required to inhibit the cytotoxic tRNA ribonuclease activity of ANG in the cytoplasm in absence of stress. Relocates to the nucleus in response to stress, relieving inhibition of ANG in the cytoplasm, and inhibiting the angiogenic activity of ANG in the nucleus. This Sus scrofa (Pig) protein is Ribonuclease inhibitor (RNH1).